Here is a 268-residue protein sequence, read N- to C-terminus: DNA ligase (268 aa).

Lys41 serves as the catalytic N6-AMP-lysine intermediate. Residues Phe111, Arg181, and Lys187 each contribute to the ATP site.

Belongs to the ATP-dependent DNA ligase family. The cofactor is a divalent metal cation.

The enzyme catalyses ATP + (deoxyribonucleotide)n-3'-hydroxyl + 5'-phospho-(deoxyribonucleotide)m = (deoxyribonucleotide)n+m + AMP + diphosphate.. Its function is as follows. Catalyzes efficient strand joining on a single nicked DNA. This Haemophilus influenzae (strain ATCC 51907 / DSM 11121 / KW20 / Rd) protein is DNA ligase (ligA).